A 90-amino-acid chain; its full sequence is DNA-directed RNA polymerase subunit omega (90 aa).

It belongs to the RNA polymerase subunit omega family. As to quaternary structure, the RNAP catalytic core consists of 2 alpha, 1 beta, 1 beta' and 1 omega subunit. When a sigma factor is associated with the core the holoenzyme is formed, which can initiate transcription.

It catalyses the reaction RNA(n) + a ribonucleoside 5'-triphosphate = RNA(n+1) + diphosphate. Functionally, promotes RNA polymerase assembly. Latches the N- and C-terminal regions of the beta' subunit thereby facilitating its interaction with the beta and alpha subunits. This is DNA-directed RNA polymerase subunit omega from Alteromonas mediterranea (strain DSM 17117 / CIP 110805 / LMG 28347 / Deep ecotype).